A 120-amino-acid polypeptide reads, in one-letter code: Immunoglobulin kappa variable 2-112 (120 aa).

The N-terminal stretch at 1-20 (MRCSLQFLGVLMFWISGVSG) is a signal peptide. Residues 21 to 43 (DIVITQDELSNPVTSGESVSISC) form a framework-1 region. An intrachain disulfide couples Cys-43 to Cys-113. Residues 44-59 (RSSKSLLYKDGKTYLN) are complementarity-determining-1. Residues 60–74 (WFLQRPGQSPQLLIY) are framework-2. Residues 75–81 (LMSTRAS) form a complementarity-determining-2 region. The segment at 82–113 (GVSDRFSGSGSGTDFTLEISRVKAEDVGVYYC) is framework-3. Residues 114-120 (QQLVEYP) are complementarity-determining-3.

The sequence is that of Immunoglobulin kappa variable 2-112 from Mus musculus (Mouse).